A 634-amino-acid polypeptide reads, in one-letter code: Chaperone protein HtpG (634 aa).

Residues 1–344 form an a; substrate-binding region; it reads MSETVSHNKE…SNDLPLNVSR (344 aa). The b stretch occupies residues 345 to 561; sequence EILQDNKVTQ…DFEMGTQMAK (217 aa). The tract at residues 562-634 is c; sequence LLEAAGQAVP…GAINKLLTKV (73 aa).

This sequence belongs to the heat shock protein 90 family. As to quaternary structure, homodimer.

Its subcellular location is the cytoplasm. In terms of biological role, molecular chaperone. Has ATPase activity. The chain is Chaperone protein HtpG from Vibrio campbellii (strain ATCC BAA-1116).